The chain runs to 310 residues: MPVSTTLLQSDLPGLPLRHRGKVRDVFDIPRDRLPADAPPGDYLLMVATDRLSAFDVVLPDPIPGKGEMLCQVSNFWFHKTEHLMPNHLVDIRVEQVLPEGVDPALYAKRAVVTRKLKPVPVEAIARGYLIGSGWKDYQRTGKISGIELPDGLRQAEKLPEPIFTPSTKAAVGDHDENIDFDAMVKTVGAELAERVRDATLRIYRFAADFAAERGILLADTKFEFGTDADGRLYIMDEMLTPDSSRYWPADQYELGTSPPSYDKQFVRDYLETLDWGKTAPGPRLPADVIERTRAKYAEALQRLAGISVD.

The protein belongs to the SAICAR synthetase family.

It catalyses the reaction 5-amino-1-(5-phospho-D-ribosyl)imidazole-4-carboxylate + L-aspartate + ATP = (2S)-2-[5-amino-1-(5-phospho-beta-D-ribosyl)imidazole-4-carboxamido]succinate + ADP + phosphate + 2 H(+). It participates in purine metabolism; IMP biosynthesis via de novo pathway; 5-amino-1-(5-phospho-D-ribosyl)imidazole-4-carboxamide from 5-amino-1-(5-phospho-D-ribosyl)imidazole-4-carboxylate: step 1/2. This chain is Phosphoribosylaminoimidazole-succinocarboxamide synthase, found in Xanthomonas campestris pv. campestris (strain B100).